The primary structure comprises 241 residues: Phycocyanobilin:ferredoxin oxidoreductase (241 aa).

Belongs to the HY2 family.

The enzyme catalyses (2R,3Z)-phycocyanobilin + 4 oxidized [2Fe-2S]-[ferredoxin] = biliverdin IXalpha + 4 reduced [2Fe-2S]-[ferredoxin] + 4 H(+). Its function is as follows. Catalyzes the four-electron reduction of biliverdin IX-alpha (2-electron reduction at both the A and D rings); the reaction proceeds via an isolatable 2-electron intermediate, 181,182-dihydrobiliverdin. This chain is Phycocyanobilin:ferredoxin oxidoreductase, found in Prochlorococcus marinus (strain MIT 9515).